The chain runs to 399 residues: Nicotinate phosphoribosyltransferase (399 aa).

The residue at position 217 (histidine 217) is a Phosphohistidine; by autocatalysis.

Belongs to the NAPRTase family. In terms of processing, transiently phosphorylated on a His residue during the reaction cycle. Phosphorylation strongly increases the affinity for substrates and increases the rate of nicotinate D-ribonucleotide production. Dephosphorylation regenerates the low-affinity form of the enzyme, leading to product release.

The enzyme catalyses nicotinate + 5-phospho-alpha-D-ribose 1-diphosphate + ATP + H2O = nicotinate beta-D-ribonucleotide + ADP + phosphate + diphosphate. The protein operates within cofactor biosynthesis; NAD(+) biosynthesis; nicotinate D-ribonucleotide from nicotinate: step 1/1. Functionally, catalyzes the synthesis of beta-nicotinate D-ribonucleotide from nicotinate and 5-phospho-D-ribose 1-phosphate at the expense of ATP. The polypeptide is Nicotinate phosphoribosyltransferase (Burkholderia mallei (strain ATCC 23344)).